Reading from the N-terminus, the 1270-residue chain is Breakpoint cluster region protein (1270 aa).

Residues 28–55 (VGDIEQELERCKASIRRLEQEVNQERFR) are a coiled coil. Disordered stretches follow at residues 67-173 (KKSY…SADA), 201-249 (ISSL…DYED), 295-396 (KSPL…RHRQ), and 412-484 (TGQI…LEPT). The segment covering 126–139 (GRPATARRPAAAAP) has biased composition (low complexity). Residues Ser216 and Ser237 each carry the phosphoserine modification. Residue Tyr247 is modified to Phosphotyrosine. 2 stretches are compositionally biased toward low complexity: residues 348–358 (SSGQSSRVSPS) and 371–384 (SPSQ…DSSS). Ser358, Ser379, and Ser384 each carry phosphoserine. Position 387 is a phosphothreonine (Thr387). 2 positions are modified to phosphoserine: Ser461 and Ser465. Arg473 is subject to Omega-N-methylarginine. 2 positions are modified to phosphoserine: Ser475 and Ser487. In terms of domain architecture, DH spans 497 to 690 (MRKWVLSGIL…QNFLSSINEE (194 aa)). At Tyr553 the chain carries Phosphotyrosine. Thr640 carries the post-translational modification Phosphothreonine. Position 643 is a phosphotyrosine (Tyr643). Thr692 carries the post-translational modification Phosphothreonine. Residues 707–865 (QLLKDSFMVE…WRESIREQQK (159 aa)) enclose the PH domain. The region spanning 892–1019 (HHIPLTINKE…QDRDWQRTVI (128 aa)) is the C2 domain. The region spanning 1053-1247 (VKIAVVTKRE…VMSQVQVLLY (195 aa)) is the Rho-GAP domain. Ser1263 is modified (phosphoserine).

Homotetramer. Interacts with PDZK1. May interact with CCPG1. Interacts with HCK, FES/FPS, ABL1, PIK3R1 and GRB2. Interacts with SH2D5. Interacts with DLG4. Autophosphorylated. Phosphorylated by FES/FPS on tyrosine residues, leading to down-regulation of the BCR kinase activity. Phosphorylation by HCK is important for interaction with GRB2. As to expression, expressed in brain, including the cortex, hippocampus, cerebellum, and brainstem, as well as the spinal cord (at protein level).

It localises to the postsynaptic density. Its subcellular location is the cell projection. It is found in the dendritic spine. The protein localises to the axon. The protein resides in the synapse. It catalyses the reaction L-seryl-[protein] + ATP = O-phospho-L-seryl-[protein] + ADP + H(+). The catalysed reaction is L-threonyl-[protein] + ATP = O-phospho-L-threonyl-[protein] + ADP + H(+). In terms of biological role, protein with a unique structure having two opposing regulatory activities toward small GTP-binding proteins. The C-terminus is a GTPase-activating protein (GAP) domain which stimulates GTP hydrolysis by RAC1, RAC2 and CDC42. Accelerates the intrinsic rate of GTP hydrolysis of RAC1 or CDC42, leading to down-regulation of the active GTP-bound form. The central Dbl homology (DH) domain functions as guanine nucleotide exchange factor (GEF) that modulates the GTPases CDC42, RHOA and RAC1. Promotes the conversion of CDC42, RHOA and RAC1 from the GDP-bound to the GTP-bound form. The amino terminus contains an intrinsic kinase activity. Functions as an important negative regulator of neuronal RAC1 activity. Regulates macrophage functions such as CSF1-directed motility and phagocytosis through the modulation of RAC1 activity. Plays a major role as a RHOA GEF in keratinocytes being involved in focal adhesion formation and keratinocyte differentiation. This Rattus norvegicus (Rat) protein is Breakpoint cluster region protein.